A 430-amino-acid chain; its full sequence is MHSWPTPDIPALDGTPVPLALYDTADQQVKPVEVPPSGSGTPVGMYVCGITPYDSTHLGHAATYLAFDLIYRVLLDNDHQVHYVQNITDVDDPLFERAERDGVDWRELGTSQIDLFRKDMETLAVIPPKDYIGAIESIDEVIEMVSTLLEEGAAYVVDDPEYPDVYASINATENFGYESNYDAATMAELFAERGGDPDRPGKRNPMDALLWRAAREGEPSWESPFGPGRPGWHIECSAIATNRLGHSFDIQGGGSDLMFPHHEFSAAHAEAAHGVERMAKHYVHAGMISQDGVKMSKSLGNLEFVHRLTAAGHEPGAIRLGVYAHHYRGDRDWSDEILAAAEARLALWRSAITVATDVQAAVDAVAQLRTHLSNDLDTPAALAAVDAWAEAALKDTGNVSDTADQFDTPEFTPAGRILAAAVDALLGVRL.

Zn(2+) is bound at residue Cys48. Residues 48–51, Thr63, and 86–88 each bind L-cysteinyl-5'-AMP; these read CGIT and NIT. Positions 50-60 match the 'HIGH' region motif; it reads ITPYDSTHLGH. The 'ERGGDP' region signature appears at 192–197; it reads ERGGDP. L-cysteinyl-5'-AMP is bound at residue Trp232. Cys236 is a binding site for Zn(2+). Residue 254 to 256 coordinates L-cysteinyl-5'-AMP; the sequence is GSD. His261 is a Zn(2+) binding site. Residue Ile288 coordinates L-cysteinyl-5'-AMP. Positions 294 to 298 match the 'KMSKS' region motif; sequence KMSKS.

The protein belongs to the class-I aminoacyl-tRNA synthetase family. MshC subfamily. As to quaternary structure, monomer. It depends on Zn(2+) as a cofactor.

It catalyses the reaction 1D-myo-inositol 2-amino-2-deoxy-alpha-D-glucopyranoside + L-cysteine + ATP = 1D-myo-inositol 2-(L-cysteinylamino)-2-deoxy-alpha-D-glucopyranoside + AMP + diphosphate + H(+). Catalyzes the ATP-dependent condensation of GlcN-Ins and L-cysteine to form L-Cys-GlcN-Ins. This chain is L-cysteine:1D-myo-inositol 2-amino-2-deoxy-alpha-D-glucopyranoside ligase (mshC), found in Corynebacterium efficiens (strain DSM 44549 / YS-314 / AJ 12310 / JCM 11189 / NBRC 100395).